A 568-amino-acid polypeptide reads, in one-letter code: Delta 8-(E)-sphingolipid desaturase (568 aa).

The Cytochrome b5 heme-binding domain maps to 2-77 (DNIISRGEIE…FRKWRIGRID (76 aa)). H37 and H60 together coordinate heme. 2 helical membrane passes run 241 to 261 (FWSA…AHDA) and 272 to 292 (LDNI…LGWW). Residues 259 to 263 (HDAGH) carry the Histidine box-1 motif. The Histidine box-2 signature appears at 296–300 (HNVHH). 3 helical membrane-spanning segments follow: residues 352-377 (YLYY…LLGL), 389-409 (YFEL…LVGC), and 421-441 (IMVS…SHFA). The Histidine box-3 signature appears at 480 to 484 (QVVHH). Residues 549–560 (ATGEREADEKTY) show a composition bias toward basic and acidic residues. Positions 549-568 (ATGEREADEKTYRTKSIKNA) are disordered.

This sequence belongs to the fatty acid desaturase type 1 family.

It localises to the membrane. It carries out the reaction an N-acylsphing-4-enine + 2 Fe(II)-[cytochrome b5] + O2 + 2 H(+) = a (4E,8E)-4-sphinga-4,8-dienine ceramide + 2 Fe(III)-[cytochrome b5] + 2 H2O. The protein operates within lipid metabolism; sphingolipid metabolism. In terms of biological role, delta(8)-fatty-acid desaturase which introduces a double bond at the 8-position in the long-chain base (LCB) of ceramides. Required for the formation of the di-unsaturated sphingoid base (E,E)-sphinga-4,8-dienine during glucosylceramide (GluCer) biosynthesis. This is Delta 8-(E)-sphingolipid desaturase from Lachancea kluyveri (strain ATCC 58438 / CBS 3082 / BCRC 21498 / NBRC 1685 / JCM 7257 / NCYC 543 / NRRL Y-12651) (Yeast).